Consider the following 315-residue polypeptide: Aspartate carbamoyltransferase catalytic subunit (315 aa).

Positions 64 and 65 each coordinate carbamoyl phosphate. K92 contacts L-aspartate. 3 residues coordinate carbamoyl phosphate: R114, H142, and Q145. L-aspartate contacts are provided by R175 and R229. Residues G270 and P271 each contribute to the carbamoyl phosphate site.

It belongs to the aspartate/ornithine carbamoyltransferase superfamily. ATCase family. In terms of assembly, heterododecamer (2C3:3R2) of six catalytic PyrB chains organized as two trimers (C3), and six regulatory PyrI chains organized as three dimers (R2).

It catalyses the reaction carbamoyl phosphate + L-aspartate = N-carbamoyl-L-aspartate + phosphate + H(+). Its pathway is pyrimidine metabolism; UMP biosynthesis via de novo pathway; (S)-dihydroorotate from bicarbonate: step 2/3. In terms of biological role, catalyzes the condensation of carbamoyl phosphate and aspartate to form carbamoyl aspartate and inorganic phosphate, the committed step in the de novo pyrimidine nucleotide biosynthesis pathway. The sequence is that of Aspartate carbamoyltransferase catalytic subunit from Xanthobacter autotrophicus (strain ATCC BAA-1158 / Py2).